Consider the following 297-residue polypeptide: MKELGRLITAMVTPFKKDGTVDYAQAQKLALGLLDSGSDGLVVVGTTGESPTVTWEEEHALFAAVKSAVGNRGKVIAGTGANSTQEALENTLKAEKIGVDACLLVVPYYNKPTQEGLYLHFKTIAEATKLPCILYNVPSRTITHMSPETVIRLSQIPNIVGVKEASGKLDDIAQIINNVRPDFTVWSGNDSDTLPMLAMGAYGVISVASHIVGKQIKEMITSFVSGNTDNAAAIHRHLTPLIRSLFVVSNPIPIKYALNYLGFEVGGLRLPMTEADEKTAALIRESLKGYTIDLPIK.

A pyruvate-binding site is contributed by T47. The Proton donor/acceptor role is filled by Y135. The active-site Schiff-base intermediate with substrate is the K163. I205 provides a ligand contact to pyruvate.

This sequence belongs to the DapA family. As to quaternary structure, homotetramer; dimer of dimers.

It localises to the cytoplasm. The catalysed reaction is L-aspartate 4-semialdehyde + pyruvate = (2S,4S)-4-hydroxy-2,3,4,5-tetrahydrodipicolinate + H2O + H(+). It functions in the pathway amino-acid biosynthesis; L-lysine biosynthesis via DAP pathway; (S)-tetrahydrodipicolinate from L-aspartate: step 3/4. Its function is as follows. Catalyzes the condensation of (S)-aspartate-beta-semialdehyde [(S)-ASA] and pyruvate to 4-hydroxy-tetrahydrodipicolinate (HTPA). This chain is 4-hydroxy-tetrahydrodipicolinate synthase, found in Dehalococcoides mccartyi (strain ATCC BAA-2266 / KCTC 15142 / 195) (Dehalococcoides ethenogenes (strain 195)).